Consider the following 101-residue polypeptide: uncharacterized protein (101 aa).

This is an uncharacterized protein from Methanocaldococcus jannaschii (strain ATCC 43067 / DSM 2661 / JAL-1 / JCM 10045 / NBRC 100440) (Methanococcus jannaschii).